The sequence spans 130 residues: Cholecystokinin (130 aa).

The N-terminal stretch at 1-20 is a signal peptide; it reads MYIGICICVLLAALSASSTG. The propeptide occupies 21 to 60; it reads QQTVGSMNEDPGAREIEQQNILQHPRHIRASSSAQLKPFQ. A Sulfotyrosine modification is found at Tyr-112. Phe-118 bears the Phenylalanine amide mark. Residues 122-130 constitute a propeptide that is removed on maturation; that stretch reads SAEEYEYSS. Sulfotyrosine is present on residues Tyr-126 and Tyr-128.

The protein belongs to the gastrin/cholecystokinin family. The precursor is cleaved by proteases to produce a number of active cholecystokinins. As to expression, expressed in brain, lung, testis and throughout the length of the small intestine. In the brain, expressed predominantly in the optic tectum and brain stem.

It localises to the secreted. In terms of biological role, this peptide hormone induces gall bladder contraction and the release of pancreatic enzymes in the gut. Its function in the brain is not clear. This Aquarana catesbeiana (American bullfrog) protein is Cholecystokinin (CCK).